The chain runs to 490 residues: Glutamate--tRNA ligase (490 aa).

The 'HIGH' region motif lies at 10–20 (PSPTGSLHIGG). The 'KMSKS' region signature appears at 251 to 255 (KLSKR). Position 254 (Lys-254) interacts with ATP.

Belongs to the class-I aminoacyl-tRNA synthetase family. Glutamate--tRNA ligase type 1 subfamily. In terms of assembly, monomer.

The protein localises to the cytoplasm. It carries out the reaction tRNA(Glu) + L-glutamate + ATP = L-glutamyl-tRNA(Glu) + AMP + diphosphate. Catalyzes the attachment of glutamate to tRNA(Glu) in a two-step reaction: glutamate is first activated by ATP to form Glu-AMP and then transferred to the acceptor end of tRNA(Glu). The protein is Glutamate--tRNA ligase of Moorella thermoacetica (strain ATCC 39073 / JCM 9320).